Reading from the N-terminus, the 495-residue chain is MAGIPPPTRNPEIKHNKIFINNQFVNSTSNKAYPVYNPCDNEKVCEVQEGDKSDIDKAVQACKAAFKRGTPWRRMDASRLGHLLYRLADLMERDIAYMASLETMDTGKPYKNSYQDMVHCIQVLRYFAGWADKNMGESIPVDGDFFCYTRNEPVGVCGLLIPYNYPMLMMTWKMAPALACGNCMIVKPAEQTPLTALYCASLIKEAGFPPGVVNVVPGFGKICGQYISSHQEINKVSFTGSTEVGMLVMQDAGKSNLKRCSMQLSGKCPLVVFEDTELDFAVQQAHEAAFQNMGQCRWSGSRTYVHENIYDEFVKRAVEKATSRKTGDPYEMDTEHGPQIDEEQYKKIMEFIKKGKDKGAQLKCGGNRHGDKGFYVEPTVFSDVTDEMKFSQEEIFGPVQLIMKFKDMDEVIDRCNNTDYGMAAAIFTNDINRSITFTHAMYCGTVWVNTYNHWFPQAPFGGYKKSGLYREMGKYTLQEYTEVKNIVYRIPQKNS.

It belongs to the aldehyde dehydrogenase family. As to expression, lens.

Functionally, omega-crystallins are structural components of squids and octopi eye lens. Contains relatively little if any DHAL activity. The sequence is that of Omega-crystallin from Nototodarus sloanii (Wellington flying squid).